The chain runs to 504 residues: Sperm motility kinase 3A (504 aa).

The Protein kinase domain maps to 28–276; it reads YVMLETIGHG…VAEVMVHPWV (249 aa). Residues 34–42 and K57 each bind ATP; that span reads IGHGGCATV. The active-site Proton acceptor is the D147. Residues 294-334 enclose the UBA domain; the sequence is KPDPAIVKAMGHIGFQAQDIEDSLRQRKFNQTMASYCLLKK. 2 disordered regions span residues 389 to 421 and 441 to 468; these read VCGK…MDHT and NSSE…WPRG. Residues 441–451 are compositionally biased toward polar residues; the sequence is NSSEESTQGHT.

Belongs to the protein kinase superfamily. CAMK Ser/Thr protein kinase family. Smok subfamily. In terms of tissue distribution, testis-specific. Expressed in the testis from 22 days postpartum (22 dpp).

The enzyme catalyses L-seryl-[protein] + ATP = O-phospho-L-seryl-[protein] + ADP + H(+). The catalysed reaction is L-threonyl-[protein] + ATP = O-phospho-L-threonyl-[protein] + ADP + H(+). May play a role in sperm motility, especially in the regulation of flagellar function. The protein is Sperm motility kinase 3A of Mus musculus (Mouse).